The following is a 428-amino-acid chain: Trigger factor (428 aa).

The region spanning 163-248 is the PPIase FKBP-type domain; that stretch reads GNIAVIDFKG…VKEIKVKELP (86 aa).

Belongs to the FKBP-type PPIase family. Tig subfamily.

The protein localises to the cytoplasm. It carries out the reaction [protein]-peptidylproline (omega=180) = [protein]-peptidylproline (omega=0). Functionally, involved in protein export. Acts as a chaperone by maintaining the newly synthesized protein in an open conformation. Functions as a peptidyl-prolyl cis-trans isomerase. This chain is Trigger factor, found in Clostridium perfringens (strain ATCC 13124 / DSM 756 / JCM 1290 / NCIMB 6125 / NCTC 8237 / Type A).